The primary structure comprises 300 residues: GGSSRHEKSLGLLTTKFVSLLQEAQDGVLDLKAAADTLAVRQKRRIYDITNVLEGIDLIEKKSKNSIQWKGVGAGCNTKEVIDRLRCLKAEIEDLELKERELDQQKLWLQQSIKNVMEDSINNRFSYVTHEDICSCFNGDTLLAIQAPSGTQLEVPIPEMGQNGQKKYQINLKSHSGPIHVLLINKESNSSKPVVFPVPPPDDLTQPSSQSSTSVTPPKSTMAAQNLPEQHVSERSQNFQQTPATEISSGSISGDIIDELMSSDVFPLLRLSPTPADDYNFNLDDNEGVCDLFDVQILNY.

A DNA-binding region spans residues 2 to 73 (GSSRHEKSLG…KNSIQWKGVG (72 aa)). The segment at 31–53 (LKAAADTLAVRQKRRIYDITNVL) is leucine-zipper. The DEF box motif lies at 36–73 (DTLAVRQKRRIYDITNVLEGIDLIEKKSKNSIQWKGVG). The segment at 74-170 (AGCNTKEVID…GQNGQKKYQI (97 aa)) is dimerization. The segment at 191–250 (SKPVVFPVPPPDDLTQPSSQSSTSVTPPKSTMAAQNLPEQHVSERSQNFQQTPATEISSG) is disordered. A compositionally biased stretch (low complexity) spans 203-221 (DLTQPSSQSSTSVTPPKST). The span at 235 to 246 (RSQNFQQTPATE) shows a compositional bias: polar residues. The tract at residues 242–300 (TPATEISSGSISGDIIDELMSSDVFPLLRLSPTPADDYNFNLDDNEGVCDLFDVQILNY) is transactivation. The tract at residues 277–294 (DDYNFNLDDNEGVCDLFD) is RBL2 association.

It belongs to the E2F/DP family. Component of the DRTF1/E2F transcription factor complex. Binds cooperatively with DP-1 to E2F sites. Interaction with retinoblastoma protein RB1 or proteins RBL1 and RBL2 inhibits the E2F transactivation domain. Component of the DREAM complex (also named LINC complex) at least composed of E2F4, E2F5, LIN9, LIN37, LIN52, LIN54, MYBL1, MYBL2, RBL1, RBL2, RBBP4, TFDP1 and TFDP2. The complex exists in quiescent cells where it represses cell cycle-dependent genes. It dissociates in S phase when LIN9, LIN37, LIN52 and LIN54 form a subcomplex that binds to MYBL2. As to expression, found in placenta followed by kidney, lung and brain.

The protein localises to the nucleus. Functionally, transcriptional activator that binds to E2F sites, these sites are present in the promoter of many genes whose products are involved in cell proliferation. May mediate growth factor-initiated signal transduction. It is likely involved in the early responses of resting cells to growth factor stimulation. Specifically required for multiciliate cell differentiation: together with MCIDAS and E2F5, binds and activate genes required for centriole biogenesis. In Rattus norvegicus (Rat), this protein is Transcription factor E2F5 (E2f5).